The chain runs to 589 residues: Complement component C8 beta chain (589 aa).

A signal peptide spans 1-31 (MKIGAQVWRALAKSCLLCATLGCLHFPGSRG). Residues 32 to 53 (GKPDFFETKAVNGSLVKSRPVR) constitute a propeptide that is removed on maturation. N-linked (GlcNAc...) asparagine glycosylation is present at Asn43. The 54-residue stretch at 63 to 116 (DCELSTWSSWTACDPCQKKRYRHTYLLRPSQFYGELCDLSDKEVEDCVTNQPCR) folds into the TSP type-1 1 domain. 7 disulfide bridges follow: Cys64–Cys99, Cys75–Cys109, Cys78–Cys115, Cys121–Cys132, Cys126–Cys145, Cys139–Cys154, and Cys161–Cys199. C-linked (Man) tryptophan glycosylation is found at Trp69 and Trp72. An LDL-receptor class A domain is found at 120-155 (RCEGFVCAQTGRCVNRRLLCNGDNDCGDQSDEANCR). The Ca(2+) site is built by Leu137, Asn140, Asp142, Asp144, Asp150, and Glu151. Residues 157 to 503 (IYKNCQREME…EFQSEVSSCR (347 aa)) enclose the MACPF domain. Beta stranded transmembrane passes span 201-206 (PHYILD), 209-213 (FRKPY), 251-258 (FNFTSGFK), 261-268 (GVMDLGIK), 328-335 (SYGEYRDL), 338-343 (DFGTHF), 378-385 (AGGSFGIG), and 391-398 (VYVKVGVS). Cys377 and Cys402 are disulfide-bonded. Residues 404-534 (DIMKEINERN…PGGFQGTACE (131 aa)) enclose the EGF-like domain. Thr417 carries the phosphothreonine modification. 4 disulfide bridges follow: Cys502-Cys549, Cys504-Cys520, Cys507-Cys522, and Cys524-Cys533. Residues 544–587 (DGKWSCWSDWSACSGGHKTRHRQCNNPAPHKGGSPCSGPASETL) form the TSP type-1 2 domain. C-linked (Man) tryptophan glycans are attached at residues Trp550 and Trp553. A disulfide bridge connects residues Cys556 and Cys589. Residues 570 to 589 (PAPHKGGSPCSGPASETLNC) are disordered.

The protein belongs to the complement C6/C7/C8/C9 family. Heterotrimer of 3 chains: alpha (C8A), beta (C8B) and gamma (C8G); the alpha and gamma chains are disulfide bonded. Component of the membrane attack complex (MAC), composed of complement C5b, C6, C7, C8A, C8B, C8G and multiple copies of the pore-forming subunit C9. N-glycosylated; contains one or two bound glycans. Not O-glycosylated.

The protein resides in the secreted. The protein localises to the target cell membrane. Its activity is regulated as follows. Membrane attack complex (MAC) assembly is inhibited by CD59, thereby protecting self-cells from damage during complement activation. CD59 acts by binding to the beta-haipins of C8 (C8A and C8B), forming an intermolecular beta-sheet that prevents incorporation of the multiple copies of C9 required for complete formation of the osmolytic pore. MAC assembly is also inhibited by clusterin (CLU) chaperones that inhibit polymerization of C9. Its function is as follows. Component of the membrane attack complex (MAC), a multiprotein complex activated by the complement cascade, which inserts into a target cell membrane and forms a pore, leading to target cell membrane rupture and cell lysis. The MAC is initiated by proteolytic cleavage of C5 into complement C5b in response to the classical, alternative, lectin and GZMK complement pathways. The complement pathways consist in a cascade of proteins that leads to phagocytosis and breakdown of pathogens and signaling that strengthens the adaptive immune system. C8B, together with C8A and C8G, inserts into the target membrane, but does not form pores by itself. During MAC assembly, associates with C5b, C6 and C7 to form the C5b8 intermediate complex that inserts into the target membrane and traverses the bilayer increasing membrane rigidity. This Mus musculus (Mouse) protein is Complement component C8 beta chain (C8b).